We begin with the raw amino-acid sequence, 214 residues long: Molybdenum cofactor guanylyltransferase (214 aa).

GTP contacts are provided by residues 18 to 20 (LAG), lysine 31, aspartate 77, and aspartate 112. Aspartate 112 contributes to the Mg(2+) binding site.

It belongs to the MobA family. In terms of assembly, monomer. Mg(2+) serves as cofactor.

The protein resides in the cytoplasm. The catalysed reaction is Mo-molybdopterin + GTP + H(+) = Mo-molybdopterin guanine dinucleotide + diphosphate. Transfers a GMP moiety from GTP to Mo-molybdopterin (Mo-MPT) cofactor (Moco or molybdenum cofactor) to form Mo-molybdopterin guanine dinucleotide (Mo-MGD) cofactor. This chain is Molybdenum cofactor guanylyltransferase, found in Rhodopseudomonas palustris (strain HaA2).